Here is a 471-residue protein sequence, read N- to C-terminus: Cysteine--tRNA ligase (471 aa).

Residue Cys29 participates in Zn(2+) binding. Positions 31-41 (PTVYNYIHIGN) match the 'HIGH' region motif. Zn(2+)-binding residues include Cys209, His234, and Glu238. Positions 266-270 (KMSKS) match the 'KMSKS' region motif. Residue Lys269 coordinates ATP.

It belongs to the class-I aminoacyl-tRNA synthetase family. As to quaternary structure, monomer. Zn(2+) is required as a cofactor.

It is found in the cytoplasm. It carries out the reaction tRNA(Cys) + L-cysteine + ATP = L-cysteinyl-tRNA(Cys) + AMP + diphosphate. This Listeria monocytogenes serotype 4b (strain CLIP80459) protein is Cysteine--tRNA ligase.